Consider the following 292-residue polypeptide: ABC transporter ATP-binding protein YtrB (292 aa).

The 226-residue stretch at 2–227 folds into the ABC transporter domain; the sequence is IELRQLSKAI…YIKIQMAFDT (226 aa). Residue 34-41 coordinates ATP; sequence GRNGSGKT.

The protein belongs to the ABC transporter superfamily. The complex is composed of 2 ATP-binding proteins (YtrB and YtrE), 2 transmembrane proteins (YtrC and YtrD) and a solute-binding protein (YtrF).

It localises to the cell membrane. In terms of biological role, part of the ABC transporter complex YtrBCDEF that plays a role in acetoin utilization during stationary phase and sporulation. This chain is ABC transporter ATP-binding protein YtrB (ytrB), found in Bacillus subtilis (strain 168).